The sequence spans 1711 residues: Serine/threonine-protein kinase MRCK beta (1711 aa).

One can recognise a Protein kinase domain in the interval 76–342; that stretch reads FEIIKVIGRG…IEDFKKHAFF (267 aa). Residues 82–90 and lysine 105 each bind ATP; that span reads IGRGAFGEV. Aspartate 200 functions as the Proton acceptor in the catalytic mechanism. Serine 221 and serine 233 each carry phosphoserine; by autocatalysis. The residue at position 239 (threonine 239) is a Phosphothreonine; by autocatalysis. An AGC-kinase C-terminal domain is found at 343 to 413; it reads EGLNWENIRN…TTESCFSDRG (71 aa). The residue at position 423 (threonine 423) is a Phosphothreonine. Coiled coils occupy residues 431-815 and 878-939; these read QRDL…AHWE and ELQS…FRAD. The segment at 461-484 is disordered; that stretch reads LQESTQTVQSLHGSSRALSNSNRD. Over residues 463–481 the composition is skewed to polar residues; it reads ESTQTVQSLHGSSRALSNS. Omega-N-methylarginine is present on arginine 671. Tyrosine 954 carries the post-translational modification Phosphotyrosine. The interval 969–1009 is disordered; the sequence is SSASEQETQAPKPEASPSMSVAASEQQEDMARPPQRPSAVP. The Phorbol-ester/DAG-type zinc-finger motif lies at 1025 to 1075; sequence AHQFSIKSFSSPTQCSHCTSLMVGLIRQGYACEVCSFACHVSCKDGAPQVC. A PH domain is found at 1095–1214; sequence GTAYKGHVKV…WVGILEGLQS (120 aa). Positions 1240-1513 constitute a CNH domain; it reads IKAILTAAIV…RPLNSEGTLN (274 aa). In terms of domain architecture, CRIB spans 1583–1596; that stretch reads ISNPTNFNHVAHMG. A disordered region spans residues 1611-1711; the sequence is AVPPSQEERP…EGLEQPACDT (101 aa). A compositionally biased stretch (polar residues) spans 1641 to 1650; it reads WPSSGGSEPS. The span at 1664-1675 shows a compositional bias: basic and acidic residues; the sequence is DFDKEPDSDSTK. Serine 1680, serine 1682, serine 1686, serine 1690, and serine 1693 each carry phosphoserine.

It belongs to the protein kinase superfamily. AGC Ser/Thr protein kinase family. DMPK subfamily. As to quaternary structure, homodimer and homotetramer via the coiled coil regions. Interacts tightly with GTP-bound but not GDP-bound CDC42. Interacts with TJP1, when in the presence of catalytically active CDC42. Forms a tripartite complex with MYO18A and LURAP1 with the latter acting as an adapter connecting CDC42BPB and MYO18A. LURAP1 binding results in activation of CDC42BPB by abolition of its negative autoregulation. Interacts with STRIP1, STRN3 and SIKE1. Interacts with CPNE4 (via VWFA domain). Interacts with LURAP1. Interacts (via AGC-kinase C-terminal domain) with FAM89B/LRAP25 (via LRR repeat). Forms a tripartite complex with FAM89B/LRAP25 and LIMK1. Requires Mg(2+) as cofactor. Proteolytically cleaved by caspases upon apoptosis induction. Expressed in all tissues examined, with high levels in heart, brain, placenta and lung.

It localises to the cytoplasm. The protein resides in the cell membrane. Its subcellular location is the cell junction. It is found in the cell projection. The protein localises to the lamellipodium. The enzyme catalyses L-seryl-[protein] + ATP = O-phospho-L-seryl-[protein] + ADP + H(+). The catalysed reaction is L-threonyl-[protein] + ATP = O-phospho-L-threonyl-[protein] + ADP + H(+). Maintained in an inactive, closed conformation by an interaction between the kinase domain and the negative autoregulatory C-terminal coiled-coil region. Agonist binding to the phorbol ester binding site disrupts this, releasing the kinase domain to allow N-terminus-mediated dimerization and kinase activation by transautophosphorylation. Inhibited by chelerythrine chloride. Its function is as follows. Serine/threonine-protein kinase which is an important downstream effector of CDC42 and plays a role in the regulation of cytoskeleton reorganization and cell migration. Regulates actin cytoskeletal reorganization via phosphorylation of PPP1R12C and MYL9/MLC2. In concert with MYO18A and LURAP1, is involved in modulating lamellar actomyosin retrograde flow that is crucial to cell protrusion and migration. Phosphorylates PPP1R12A. In concert with FAM89B/LRAP25 mediates the targeting of LIMK1 to the lamellipodium resulting in its activation and subsequent phosphorylation of CFL1 which is important for lamellipodial F-actin regulation. This is Serine/threonine-protein kinase MRCK beta from Homo sapiens (Human).